We begin with the raw amino-acid sequence, 153 residues long: 3-hydroxyacyl-[acyl-carrier-protein] dehydratase FabZ (153 aa).

H57 is a catalytic residue.

The protein belongs to the thioester dehydratase family. FabZ subfamily.

It localises to the cytoplasm. The catalysed reaction is a (3R)-hydroxyacyl-[ACP] = a (2E)-enoyl-[ACP] + H2O. Its function is as follows. Involved in unsaturated fatty acids biosynthesis. Catalyzes the dehydration of short chain beta-hydroxyacyl-ACPs and long chain saturated and unsaturated beta-hydroxyacyl-ACPs. This chain is 3-hydroxyacyl-[acyl-carrier-protein] dehydratase FabZ, found in Vibrio cholerae serotype O1 (strain ATCC 39315 / El Tor Inaba N16961).